The sequence spans 541 residues: MDRLIKLDPSNIVLIRVEEGQKCLGKITLNNVMYTMPVAFRIQPLIKTRYTIKPQSGIISPLASLVIEITYHPPQQQGSNNLPHSFPFSDDSFLLHSVLAPGAAIKEPSSMFDSVPSDWFTTKKKQVFIDSAIKVMFVGSQILTQLVEDGNSMDDIREVLEKSDPLWESVNSKDSQGQTLLHLAISKTRPDLVQLILEFKPDIEAINSVGSTPLEAASSSGESLIVELLLAHKANTEGSESSVFRPIHHASREGHMEILRLLLLKGARVDSLTKDGNTSLHLAVEEKRRDCARLLLANGARTDVRNMREGDTPLHIAAANGDENMVKLLLHKGATKYVRNKLGKTAFDVAAENGHSRLFDALRLGDNLCAAARKGEVRTIQKVLESGGVINGRDQNGWTSLHRAAFKGRMDAVRFLVEKGIDLDAKDEDGYTALHCAAESGHADVTEFLVKKGADVEARTNKGVSALQIVESLNYVGITRILVNGGASREGLGEKPPSAPSKIPFGRKVESGSVMTMKKKMSSRTRALRGSFDHSMPLAVL.

Positions Leu-4–Val-138 constitute an MSP domain. 10 ANK repeats span residues Gln-176–Ala-205, Val-209–Gly-238, Ser-242–Ser-271, Asp-275–Val-304, Glu-309–Val-338, Leu-342–Ala-372, Lys-374–Gly-392, Asn-396–Ala-425, Asp-429–Ala-458, and Lys-462–Gly-491.

As to quaternary structure, interacts with EX70I at the periarbuscular membrane (PAM) around the arbuscule hyphal tips. As to expression, expressed in roots.

The protein resides in the cytoplasm. The protein localises to the nucleus. It is found in the cell membrane. In terms of biological role, required for arbuscular mycorrhizal (AM) symbiosis with AM fungi (e.g. Glomus versiforme and Gigaspora gigantea) both during fungal passage across root epidermis and for arbuscule formation in cortical cells; this symbiosis promotes phosphorus (P) and copper (Cu) uptake. Essential for infection by symbiotic nitrogen-fixing rhizobial bacteria (e.g. Sinorhizobium meliloti) leading to the formation of root nodules. The polypeptide is Protein VAPYRIN (Medicago truncatula (Barrel medic)).